The following is a 374-amino-acid chain: MATLGFNTRRIQTPSLPRIPKPSSFTKPIKTHHLFSSETLLKRCRFVSRSLPESSLSITKEQEVANEVEEDDPTSELSYLDPESDADSIKEWELDFCSRPILDSRGKKIWELVVCDASLSLQVTKYFPNNVINSITLKDAIVTITQDLGVPLPEKIRFFRSQMQTIITKACKELAIKAVPSKRCLSLFLWLQERYDTVYTRHPGFQKGSLPLLSLDNPFPMNLPENLFGEKWAFVQLPYSAVREEISDFDEKFVFGASLDLDLLGIEVDENTLIPGLSVATSRAKPLAAWMNGLEVCSIEADSSKGCLILSVGIATRYVYATYKKTPVTTDEAEAWESAKKTSGGLHFLAIQDDLDSDDCVGFWLLIDLPPPPV.

A chloroplast-targeting transit peptide spans 1–64 (MATLGFNTRR…SLSITKEQEV (64 aa)). A disordered region spans residues 58-84 (ITKEQEVANEVEEDDPTSELSYLDPES). Positions 64 to 74 (VANEVEEDDPT) are enriched in acidic residues.

The protein resides in the plastid. It is found in the chloroplast. Nuclear genome-encoded A/U-rich RNA-binding protein involved in the biogenesis of photosystem I (PSI) and II (PSII). Required for the light-controlled accumulation of PSI and PSII during early plant development. Does not seem to be required for the translation of mRNAs of the PSI subunits. This is Protein TAB2 homolog, chloroplastic from Arabidopsis thaliana (Mouse-ear cress).